The chain runs to 260 residues: Achaete-scute homolog 2 (260 aa).

Disordered stretches follow at residues 85–126 and 191–239; these read AGAC…RNER and PATR…EDSS. Low complexity-rich tracts occupy residues 110–121 and 200–218; these read ATEASSSSAAVA and TQPS…STSP. The bHLH domain maps to 118 to 170; that stretch reads AAVARRNERERNRVKLVNLGFQALRQHVPHGGANKKLSKVETLRSAVEYIRAL.

In terms of assembly, efficient DNA binding requires dimerization with another bHLH protein. Forms heterodimers with bHLH transcription factor TCF3. May not heterodimerise with bHLH protein HAND1. In terms of tissue distribution, expressed in Schwann cells in the peripheral nerve (at protein level). Also expressed by endothelial cells (at protein level). May be expressed in neuronal precursor cells.

The protein localises to the nucleus. Its subcellular location is the cytoplasm. Its function is as follows. Transcription factor. Binds to E-box motifs 5'-CANNTG-3' in the regulatory elements of target genes, probably as a heterodimer with another basic helix-loop-helix (bHLH) protein such as the transcription factor TCF3. May bind both open and closed chromatin, acting as a pioneer transcription factor to allow other factors to bind and activate lineage-specific genes. Required during post-implantation development for the generation of some differentiated trophoblast cell types. Transcriptional activity of ASCL2 may be antagonised in a subset of trophoblast cells by bHLH transcription factor HAND1, perhaps by competing for dimerization with other bHLH proteins. Involved in differentiation and function of follicular T-helper (Tfh) cells, thereby playing a role in germinal center responses; probably modulates expression of genes involved in Tfh cell function, such as BCL6. May also act as a suppressor of Th1-, Th2- and Th17-cell differentiation. Induces the formation of stem cells in intestinal crypts in vitro, synergistically activating transcription of target genes, such as SOX9, together with TCF4/beta-catenin. May form a bistable transcriptional switch, controlling expression of its own gene together with Wnt/R-spondin signaling, and thereby maintaining stem cell characteristics. Modulates expression of target genes, including perhaps down-regulating EGR1/Krox24 and chemokine CXCL10/Mob-1 and up-regulating CXCR4 and CDKN1C/p57kip2, in Schwann cells. May play a role in reducing proliferation of Schwann cells, perhaps acting via modulation of expression of CDKN1C. May be dispensable for blastocyst formation and later embryonic function. May be involved in the determination of neuronal precursors. The chain is Achaete-scute homolog 2 (Ascl2) from Rattus norvegicus (Rat).